The following is a 311-amino-acid chain: Pyrimidine-specific ribonucleoside hydrolase RihA (311 aa).

H240 is a catalytic residue.

This sequence belongs to the IUNH family. RihA subfamily.

Hydrolyzes with equal efficiency cytidine or uridine to ribose and cytosine or uracil, respectively. The protein is Pyrimidine-specific ribonucleoside hydrolase RihA of Escherichia coli (strain ATCC 8739 / DSM 1576 / NBRC 3972 / NCIMB 8545 / WDCM 00012 / Crooks).